The chain runs to 260 residues: Thiazole synthase (260 aa).

Catalysis depends on K96, which acts as the Schiff-base intermediate with DXP. 1-deoxy-D-xylulose 5-phosphate contacts are provided by residues G157, 184–185 (AG), and 206–207 (NT).

This sequence belongs to the ThiG family. Homotetramer. Forms heterodimers with either ThiH or ThiS.

The protein localises to the cytoplasm. The catalysed reaction is [ThiS sulfur-carrier protein]-C-terminal-Gly-aminoethanethioate + 2-iminoacetate + 1-deoxy-D-xylulose 5-phosphate = [ThiS sulfur-carrier protein]-C-terminal Gly-Gly + 2-[(2R,5Z)-2-carboxy-4-methylthiazol-5(2H)-ylidene]ethyl phosphate + 2 H2O + H(+). It functions in the pathway cofactor biosynthesis; thiamine diphosphate biosynthesis. Its function is as follows. Catalyzes the rearrangement of 1-deoxy-D-xylulose 5-phosphate (DXP) to produce the thiazole phosphate moiety of thiamine. Sulfur is provided by the thiocarboxylate moiety of the carrier protein ThiS. In vitro, sulfur can be provided by H(2)S. The sequence is that of Thiazole synthase from Rhodopseudomonas palustris (strain BisB5).